The sequence spans 271 residues: Ribosomal RNA small subunit methyltransferase A (271 aa).

Residues histidine 11, leucine 13, glycine 38, glutamate 59, aspartate 84, and asparagine 109 each contribute to the S-adenosyl-L-methionine site.

This sequence belongs to the class I-like SAM-binding methyltransferase superfamily. rRNA adenine N(6)-methyltransferase family. RsmA subfamily.

It is found in the cytoplasm. The enzyme catalyses adenosine(1518)/adenosine(1519) in 16S rRNA + 4 S-adenosyl-L-methionine = N(6)-dimethyladenosine(1518)/N(6)-dimethyladenosine(1519) in 16S rRNA + 4 S-adenosyl-L-homocysteine + 4 H(+). Specifically dimethylates two adjacent adenosines (A1518 and A1519) in the loop of a conserved hairpin near the 3'-end of 16S rRNA in the 30S particle. May play a critical role in biogenesis of 30S subunits. This chain is Ribosomal RNA small subunit methyltransferase A, found in Trichormus variabilis (strain ATCC 29413 / PCC 7937) (Anabaena variabilis).